We begin with the raw amino-acid sequence, 307 residues long: Probable protein S-acyltransferase 14 (307 aa).

A run of 2 helical transmembrane segments spans residues 22–42 (LGSI…YAVV) and 63–83 (ILIL…SVVF). The DHHC domain maps to 127–177 (RFCRKCNQLKPSRCHHCSVCGRCVLKMDHHCVWVVNCVGALNYKYFLLFLF). Residue C157 is the S-palmitoyl cysteine intermediate of the active site. The next 2 helical transmembrane spans lie at 171 to 191 (YFLL…LVLM) and 213 to 233 (TFLA…FLIM).

The protein belongs to the DHHC palmitoyltransferase family.

The protein resides in the golgi apparatus. It is found in the trans-Golgi network membrane. It catalyses the reaction L-cysteinyl-[protein] + hexadecanoyl-CoA = S-hexadecanoyl-L-cysteinyl-[protein] + CoA. Functionally, palmitoyl acyltransferase. In Arabidopsis thaliana (Mouse-ear cress), this protein is Probable protein S-acyltransferase 14 (PAT14).